The chain runs to 548 residues: 2-succinyl-5-enolpyruvyl-6-hydroxy-3-cyclohexene-1-carboxylate synthase (548 aa).

It belongs to the TPP enzyme family. MenD subfamily. As to quaternary structure, homodimer. Mg(2+) serves as cofactor. The cofactor is Mn(2+). Requires thiamine diphosphate as cofactor.

The catalysed reaction is isochorismate + 2-oxoglutarate + H(+) = 5-enolpyruvoyl-6-hydroxy-2-succinyl-cyclohex-3-ene-1-carboxylate + CO2. Its pathway is quinol/quinone metabolism; 1,4-dihydroxy-2-naphthoate biosynthesis; 1,4-dihydroxy-2-naphthoate from chorismate: step 2/7. It functions in the pathway quinol/quinone metabolism; menaquinone biosynthesis. Catalyzes the thiamine diphosphate-dependent decarboxylation of 2-oxoglutarate and the subsequent addition of the resulting succinic semialdehyde-thiamine pyrophosphate anion to isochorismate to yield 2-succinyl-5-enolpyruvyl-6-hydroxy-3-cyclohexene-1-carboxylate (SEPHCHC). This Mycolicibacterium vanbaalenii (strain DSM 7251 / JCM 13017 / BCRC 16820 / KCTC 9966 / NRRL B-24157 / PYR-1) (Mycobacterium vanbaalenii) protein is 2-succinyl-5-enolpyruvyl-6-hydroxy-3-cyclohexene-1-carboxylate synthase.